The chain runs to 357 residues: 4-hydroxymandelate synthase (357 aa).

VOC domains are found at residues E5–R129 and G158–A309. Fe cation is bound at residue H161. Positions 161, 201, 214, 241, and 305 each coordinate substrate. Position 241 (H241) interacts with Fe cation. Residue E320 coordinates Fe cation.

The protein belongs to the 4HPPD family. As to quaternary structure, monomer. Requires Fe cation as cofactor.

It carries out the reaction 3-(4-hydroxyphenyl)pyruvate + O2 = (S)-4-hydroxymandelate + CO2. The protein operates within antibiotic biosynthesis; vancomycin biosynthesis. Required to synthesize hydroxyphenylglycine, a recurring skeletal component of nonproteinogenic macrocyclic peptide antibiotics such as vancomycin. Catalyzes the conversion of p-hydroxyphenylpyruvate to p-hydroxymandelate. The decarboxylation and hydroxylation activities of HmaS show novel and distinct regioselectivity, compared to all other known p-hydroxyphenylpyruvate dioxygenases, by hydroxylating the benzylic position of the substrate instead of the phenyl ring. The chain is 4-hydroxymandelate synthase from Amycolatopsis orientalis (Nocardia orientalis).